A 125-amino-acid polypeptide reads, in one-letter code: Basic leucine zipper transcriptional factor ATF-like (125 aa).

Residues 1–14 (MPHSSDSSDSSFSR) are compositionally biased toward low complexity. Residues 1-58 (MPHSSDSSDSSFSRSPPPGKQDSSDDVRKVQRREKNRIAAQKSRQRQTQKADTLHLES) form a disordered region. In terms of domain architecture, bZIP spans 26 to 89 (DVRKVQRREK…KYFTSVLSSH (64 aa)). The interval 28 to 50 (RKVQRREKNRIAAQKSRQRQTQK) is basic motif. The residue at position 43 (Ser43) is a Phosphoserine. Residue Thr48 is modified to Phosphothreonine. The segment at 54-75 (LHLESEDLEKQNAALRKEIKQL) is leucine-zipper.

Belongs to the bZIP family. As to quaternary structure, heterodimer; mainly heterodimerizes with JUNB. The BATF-JUNB heterodimer interacts with IRF4 and IRF8. Interacts (via bZIP domain) with IRF4 and IRF8; the interaction is direct. Also forms heterodimers with JUN and JUND. Interacts with IFI35. Phosphorylated on serine and threonine residues and at least one tyrosine residue. Phosphorylation at Ser-43 inhibit DNA binding activity and transforms it as a negative regulator of AP-1 mediated transcription.

It localises to the nucleus. The protein localises to the cytoplasm. AP-1 family transcription factor that controls the differentiation of lineage-specific cells in the immune system: specifically mediates the differentiation of T-helper 17 cells (Th17), follicular T-helper cells (TfH), CD8(+) dendritic cells and class-switch recombination (CSR) in B-cells. Acts via the formation of a heterodimer with JUNB that recognizes and binds DNA sequence 5'-TGA[CG]TCA-3'. The BATF-JUNB heterodimer also forms a complex with IRF4 (or IRF8) in immune cells, leading to recognition of AICE sequence (5'-TGAnTCA/GAAA-3'), an immune-specific regulatory element, followed by cooperative binding of BATF and IRF4 (or IRF8) and activation of genes. Controls differentiation of T-helper cells producing interleukin-17 (Th17 cells) by binding to Th17-associated gene promoters: regulates expression of the transcription factor RORC itself and RORC target genes such as IL17 (IL17A or IL17B). Also involved in differentiation of follicular T-helper cells (TfH) by directing expression of BCL6 and MAF. In B-cells, involved in class-switch recombination (CSR) by controlling the expression of both AICDA and of germline transcripts of the intervening heavy-chain region and constant heavy-chain region (I(H)-C(H)). Following infection, can participate in CD8(+) dendritic cell differentiation via interaction with IRF4 and IRF8 to mediate cooperative gene activation. Regulates effector CD8(+) T-cell differentiation by regulating expression of SIRT1. Following DNA damage, part of a differentiation checkpoint that limits self-renewal of hematopoietic stem cells (HSCs): up-regulated by STAT3, leading to differentiation of HSCs, thereby restricting self-renewal of HSCs. The sequence is that of Basic leucine zipper transcriptional factor ATF-like (BATF) from Bos taurus (Bovine).